A 338-amino-acid polypeptide reads, in one-letter code: Ketol-acid reductoisomerase (NADP(+)) (338 aa).

Positions 1 to 181 constitute a KARI N-terminal Rossmann domain; the sequence is MKVFYDKDAD…GGGRAGIIET (181 aa). Residues 24-27, Arg47, and Ser52 each bind NADP(+); that span reads YGSQ. Residue His107 is part of the active site. Gly133 contacts NADP(+). A KARI C-terminal knotted domain is found at 182-327; that stretch reads NFREETETDL…AKLRAMMPWI (146 aa). Residues Asp190, Glu194, Glu226, and Glu230 each coordinate Mg(2+). Ser251 is a substrate binding site.

This sequence belongs to the ketol-acid reductoisomerase family. The cofactor is Mg(2+).

The catalysed reaction is (2R)-2,3-dihydroxy-3-methylbutanoate + NADP(+) = (2S)-2-acetolactate + NADPH + H(+). The enzyme catalyses (2R,3R)-2,3-dihydroxy-3-methylpentanoate + NADP(+) = (S)-2-ethyl-2-hydroxy-3-oxobutanoate + NADPH + H(+). It participates in amino-acid biosynthesis; L-isoleucine biosynthesis; L-isoleucine from 2-oxobutanoate: step 2/4. It functions in the pathway amino-acid biosynthesis; L-valine biosynthesis; L-valine from pyruvate: step 2/4. In terms of biological role, involved in the biosynthesis of branched-chain amino acids (BCAA). Catalyzes an alkyl-migration followed by a ketol-acid reduction of (S)-2-acetolactate (S2AL) to yield (R)-2,3-dihydroxy-isovalerate. In the isomerase reaction, S2AL is rearranged via a Mg-dependent methyl migration to produce 3-hydroxy-3-methyl-2-ketobutyrate (HMKB). In the reductase reaction, this 2-ketoacid undergoes a metal-dependent reduction by NADPH to yield (R)-2,3-dihydroxy-isovalerate. This is Ketol-acid reductoisomerase (NADP(+)) from Polynucleobacter necessarius subsp. necessarius (strain STIR1).